A 96-amino-acid polypeptide reads, in one-letter code: Phosphoribosyl-ATP pyrophosphatase (96 aa).

The protein belongs to the PRA-PH family.

Its subcellular location is the cytoplasm. The enzyme catalyses 1-(5-phospho-beta-D-ribosyl)-ATP + H2O = 1-(5-phospho-beta-D-ribosyl)-5'-AMP + diphosphate + H(+). It participates in amino-acid biosynthesis; L-histidine biosynthesis; L-histidine from 5-phospho-alpha-D-ribose 1-diphosphate: step 2/9. This chain is Phosphoribosyl-ATP pyrophosphatase, found in Methanococcus aeolicus (strain ATCC BAA-1280 / DSM 17508 / OCM 812 / Nankai-3).